Consider the following 198-residue polypeptide: Dephospho-CoA kinase (198 aa).

The DPCK domain occupies 3-198; sequence VVGLTGGIGA…HRRYSLLAAA (196 aa). 11 to 16 lines the ATP pocket; the sequence is GAGKST.

This sequence belongs to the CoaE family.

The protein resides in the cytoplasm. The catalysed reaction is 3'-dephospho-CoA + ATP = ADP + CoA + H(+). Its pathway is cofactor biosynthesis; coenzyme A biosynthesis; CoA from (R)-pantothenate: step 5/5. Its function is as follows. Catalyzes the phosphorylation of the 3'-hydroxyl group of dephosphocoenzyme A to form coenzyme A. The protein is Dephospho-CoA kinase of Methylococcus capsulatus (strain ATCC 33009 / NCIMB 11132 / Bath).